Reading from the N-terminus, the 510-residue chain is NAD(P)H-quinone oxidoreductase subunit 2 B, chloroplastic (510 aa).

A run of 13 helical transmembrane segments spans residues 24–44 (LLLF…GLIL), 57–77 (IPWL…ALLF), 99–119 (IFQF…VEYI), 124–144 (MAIT…MFLC), 149–169 (LITI…LSGY), 183–203 (YLLM…WLYG), 227–247 (PGIS…LSPA), 295–315 (WHLH…LIAI), 323–343 (MLAY…IVGD), 347–367 (GYAS…GTFA), 395–415 (ALSL…AGFF), 418–438 (LHLF…IGLL), and 484–504 (MIVC…IIAI).

It belongs to the complex I subunit 2 family. NDH is composed of at least 16 different subunits, 5 of which are encoded in the nucleus.

It localises to the plastid. The protein resides in the chloroplast thylakoid membrane. It carries out the reaction a plastoquinone + NADH + (n+1) H(+)(in) = a plastoquinol + NAD(+) + n H(+)(out). It catalyses the reaction a plastoquinone + NADPH + (n+1) H(+)(in) = a plastoquinol + NADP(+) + n H(+)(out). Functionally, NDH shuttles electrons from NAD(P)H:plastoquinone, via FMN and iron-sulfur (Fe-S) centers, to quinones in the photosynthetic chain and possibly in a chloroplast respiratory chain. The immediate electron acceptor for the enzyme in this species is believed to be plastoquinone. Couples the redox reaction to proton translocation, and thus conserves the redox energy in a proton gradient. This chain is NAD(P)H-quinone oxidoreductase subunit 2 B, chloroplastic, found in Buxus microphylla (Littleleaf boxwood).